A 137-amino-acid polypeptide reads, in one-letter code: MNEMKVGRYVVLTDRLYTETDEWVVLSNDNVAVIGITDYAQKKLRDIVGIELPQLQKEVKAGESVGVIESVKAAADIFSPLSGIIVEVNNKLLEHPEIINKDPYGEGWIFKLKASKLSEEKEKLLSPEKYIEKIKGG.

Positions 31-113 (VAVIGITDYA…YGEGWIFKLK (83 aa)) constitute a Lipoyl-binding domain. Position 72 is an N6-lipoyllysine (Lys72).

This sequence belongs to the GcvH family. As to quaternary structure, the glycine cleavage system is composed of four proteins: P, T, L and H. Requires (R)-lipoate as cofactor.

Its function is as follows. The glycine cleavage system catalyzes the degradation of glycine. The H protein shuttles the methylamine group of glycine from the P protein to the T protein. This chain is Probable glycine cleavage system H protein 1, found in Saccharolobus solfataricus (strain ATCC 35092 / DSM 1617 / JCM 11322 / P2) (Sulfolobus solfataricus).